The following is a 232-amino-acid chain: RNA chaperone ProQ (232 aa).

The disordered stretch occupies residues 105–182 (EAKARVQAQR…REEQHTPVSD (78 aa)). 2 stretches are compositionally biased toward basic and acidic residues: residues 117 to 138 (QQAKKREAAAAAGEKEDAPPRE) and 147 to 177 (RRKEGAERKPRAQKPVEKAPKTVKAPREEQH).

This sequence belongs to the ProQ family.

Its subcellular location is the cytoplasm. Its function is as follows. RNA chaperone with significant RNA binding, RNA strand exchange and RNA duplexing activities. May regulate ProP activity through an RNA-based, post-transcriptional mechanism. This is RNA chaperone ProQ from Escherichia coli O139:H28 (strain E24377A / ETEC).